Consider the following 99-residue polypeptide: Plastocyanin (99 aa).

Residues 1-99 form the Plastocyanin-like domain; it reads IEIKLGGDDG…AGMVGKVTVQ (99 aa). The Cu cation site is built by His37, Cys84, His87, and Met92.

It belongs to the plastocyanin family. Cu(2+) serves as cofactor.

It localises to the plastid. It is found in the chloroplast thylakoid membrane. In terms of biological role, participates in electron transfer between P700 and the cytochrome b6-f complex in photosystem I. The polypeptide is Plastocyanin (PETE) (Rumex obtusifolius (Bitter dock)).